A 457-amino-acid chain; its full sequence is tRNA modification GTPase MnmE (457 aa).

Residues Arg-22, Glu-83, and Arg-122 each coordinate (6S)-5-formyl-5,6,7,8-tetrahydrofolate. The TrmE-type G domain occupies 219 to 378 (GLATAIIGRP…LEEAIKTLFF (160 aa)). Asn-229 serves as a coordination point for K(+). Residues 229 to 234 (NVGKSS), 248 to 254 (TDIAGTT), and 273 to 276 (DTAG) contribute to the GTP site. Ser-233 is a binding site for Mg(2+). Thr-248, Ile-250, and Thr-253 together coordinate K(+). A Mg(2+)-binding site is contributed by Thr-254. Position 457 (Lys-457) interacts with (6S)-5-formyl-5,6,7,8-tetrahydrofolate.

The protein belongs to the TRAFAC class TrmE-Era-EngA-EngB-Septin-like GTPase superfamily. TrmE GTPase family. In terms of assembly, homodimer. Heterotetramer of two MnmE and two MnmG subunits. It depends on K(+) as a cofactor.

The protein resides in the cytoplasm. In terms of biological role, exhibits a very high intrinsic GTPase hydrolysis rate. Involved in the addition of a carboxymethylaminomethyl (cmnm) group at the wobble position (U34) of certain tRNAs, forming tRNA-cmnm(5)s(2)U34. This chain is tRNA modification GTPase MnmE, found in Listeria welshimeri serovar 6b (strain ATCC 35897 / DSM 20650 / CCUG 15529 / CIP 8149 / NCTC 11857 / SLCC 5334 / V8).